Here is a 511-residue protein sequence, read N- to C-terminus: Sodium/proline symporter (511 aa).

The next 13 helical transmembrane spans lie at 16-36 (WQTY…AFTY), 53-73 (IGPY…WMIM), 84-104 (LSAM…YFVV), 138-158 (IISG…GFVS), 173-193 (FGLI…GYLA), 199-219 (FFQG…AMMN), 239-259 (LFKG…LGYF), 285-305 (ISWM…GIAF), 326-346 (VLFH…AIMS), 380-400 (FVMI…AIAW), 409-429 (LVGN…LFAL), 437-457 (AGAV…IAWI), and 466-486 (IFGL…TYVV).

The protein belongs to the sodium:solute symporter (SSF) (TC 2.A.21) family.

It localises to the cell membrane. It catalyses the reaction L-proline(in) + Na(+)(in) = L-proline(out) + Na(+)(out). In terms of biological role, catalyzes the sodium-dependent uptake of extracellular L-proline. Since most S.aureus strains are L-proline auxotrophs, this transporter may aid the bacterial persistence during an infection of tissues with low proline concentrations. The polypeptide is Sodium/proline symporter (Staphylococcus aureus).